The chain runs to 117 residues: Ribonuclease P protein component (117 aa).

This sequence belongs to the RnpA family. As to quaternary structure, consists of a catalytic RNA component (M1 or rnpB) and a protein subunit.

It catalyses the reaction Endonucleolytic cleavage of RNA, removing 5'-extranucleotides from tRNA precursor.. In terms of biological role, RNaseP catalyzes the removal of the 5'-leader sequence from pre-tRNA to produce the mature 5'-terminus. It can also cleave other RNA substrates such as 4.5S RNA. The protein component plays an auxiliary but essential role in vivo by binding to the 5'-leader sequence and broadening the substrate specificity of the ribozyme. The polypeptide is Ribonuclease P protein component (Thermotoga petrophila (strain ATCC BAA-488 / DSM 13995 / JCM 10881 / RKU-1)).